A 298-amino-acid chain; its full sequence is Inosose dehydratase (298 aa).

It belongs to the IolE/MocC family. It depends on glutathione as a cofactor. Requires Co(2+) as cofactor. Mn(2+) serves as cofactor.

The enzyme catalyses scyllo-inosose = 3D-3,5/4-trihydroxycyclohexane-1,2-dione + H2O. It functions in the pathway polyol metabolism; myo-inositol degradation into acetyl-CoA; acetyl-CoA from myo-inositol: step 2/7. Its function is as follows. Catalyzes the dehydration of inosose (2-keto-myo-inositol, 2KMI or 2,4,6/3,5-pentahydroxycyclohexanone) to 3D-(3,5/4)-trihydroxycyclohexane-1,2-dione (D-2,3-diketo-4-deoxy-epi-inositol). The chain is Inosose dehydratase from Geobacillus thermodenitrificans (strain NG80-2).